Reading from the N-terminus, the 409-residue chain is Dihydrolipoyllysine-residue succinyltransferase component of 2-oxoglutarate dehydrogenase complex (409 aa).

Residues 2 to 77 enclose the Lipoyl-binding domain; sequence AIEILVPDLP…VSKQLLGKIS (76 aa). Lys43 is modified (N6-lipoyllysine). A compositionally biased stretch (polar residues) spans 83–107; it reads DVSSATLKATNEPTPSDRQNAAIEN. Positions 83-114 are disordered; the sequence is DVSSATLKATNEPTPSDRQNAAIENSHNHNAD. Positions 114-151 constitute a Peripheral subunit-binding (PSBD) domain; sequence DQSPVIRRLLAEHDLQADQIQGSGVGGRLTREDIEREI. Residues His380 and Asp384 contribute to the active site.

Belongs to the 2-oxoacid dehydrogenase family. As to quaternary structure, forms a 24-polypeptide structural core with octahedral symmetry. Part of the 2-oxoglutarate dehydrogenase (OGDH) complex composed of E1 (2-oxoglutarate dehydrogenase), E2 (dihydrolipoamide succinyltransferase) and E3 (dihydrolipoamide dehydrogenase); the complex contains multiple copies of the three enzymatic components (E1, E2 and E3). It depends on (R)-lipoate as a cofactor.

The enzyme catalyses N(6)-[(R)-dihydrolipoyl]-L-lysyl-[protein] + succinyl-CoA = N(6)-[(R)-S(8)-succinyldihydrolipoyl]-L-lysyl-[protein] + CoA. It functions in the pathway amino-acid degradation; L-lysine degradation via saccharopine pathway; glutaryl-CoA from L-lysine: step 6/6. E2 component of the 2-oxoglutarate dehydrogenase (OGDH) complex which catalyzes the second step in the conversion of 2-oxoglutarate to succinyl-CoA and CO(2). The chain is Dihydrolipoyllysine-residue succinyltransferase component of 2-oxoglutarate dehydrogenase complex (sucB) from Haemophilus influenzae (strain ATCC 51907 / DSM 11121 / KW20 / Rd).